We begin with the raw amino-acid sequence, 352 residues long: DNA polymerase IV (352 aa).

The UmuC domain occupies 7-187 (IIHIDMDCFY…LSLKKIPGIG (181 aa)). Mg(2+)-binding residues include Asp-11 and Asp-105. Glu-106 is a catalytic residue.

The protein belongs to the DNA polymerase type-Y family. As to quaternary structure, monomer. Mg(2+) serves as cofactor.

The protein localises to the cytoplasm. It carries out the reaction DNA(n) + a 2'-deoxyribonucleoside 5'-triphosphate = DNA(n+1) + diphosphate. Its function is as follows. Poorly processive, error-prone DNA polymerase involved in untargeted mutagenesis. Copies undamaged DNA at stalled replication forks, which arise in vivo from mismatched or misaligned primer ends. These misaligned primers can be extended by PolIV. Exhibits no 3'-5' exonuclease (proofreading) activity. May be involved in translesional synthesis, in conjunction with the beta clamp from PolIII. This Colwellia psychrerythraea (strain 34H / ATCC BAA-681) (Vibrio psychroerythus) protein is DNA polymerase IV.